The chain runs to 279 residues: Putative pyruvate, phosphate dikinase regulatory protein (279 aa).

ADP is bound at residue 153–160 (GISRTSKT).

The protein belongs to the pyruvate, phosphate/water dikinase regulatory protein family. PDRP subfamily.

It carries out the reaction N(tele)-phospho-L-histidyl/L-threonyl-[pyruvate, phosphate dikinase] + ADP = N(tele)-phospho-L-histidyl/O-phospho-L-threonyl-[pyruvate, phosphate dikinase] + AMP + H(+). The enzyme catalyses N(tele)-phospho-L-histidyl/O-phospho-L-threonyl-[pyruvate, phosphate dikinase] + phosphate + H(+) = N(tele)-phospho-L-histidyl/L-threonyl-[pyruvate, phosphate dikinase] + diphosphate. In terms of biological role, bifunctional serine/threonine kinase and phosphorylase involved in the regulation of the pyruvate, phosphate dikinase (PPDK) by catalyzing its phosphorylation/dephosphorylation. This is Putative pyruvate, phosphate dikinase regulatory protein from Brucella abortus (strain 2308).